Here is a 278-residue protein sequence, read N- to C-terminus: NADPH-dependent 7-cyano-7-deazaguanine reductase (278 aa).

87–89 (IES) is a binding site for substrate. 89–90 (SK) serves as a coordination point for NADPH. Cysteine 185 acts as the Thioimide intermediate in catalysis. Aspartate 192 (proton donor) is an active-site residue. 224-225 (HE) contacts substrate. 253–254 (RG) serves as a coordination point for NADPH. A disordered region spans residues 255–278 (GLDINPYRSTNPTFSVQNHRSFRQ). A compositionally biased stretch (polar residues) spans 261–278 (YRSTNPTFSVQNHRSFRQ).

This sequence belongs to the GTP cyclohydrolase I family. QueF type 2 subfamily. Homodimer.

Its subcellular location is the cytoplasm. The catalysed reaction is 7-aminomethyl-7-carbaguanine + 2 NADP(+) = 7-cyano-7-deazaguanine + 2 NADPH + 3 H(+). It participates in tRNA modification; tRNA-queuosine biosynthesis. In terms of biological role, catalyzes the NADPH-dependent reduction of 7-cyano-7-deazaguanine (preQ0) to 7-aminomethyl-7-deazaguanine (preQ1). The chain is NADPH-dependent 7-cyano-7-deazaguanine reductase from Coxiella burnetii (strain CbuG_Q212) (Coxiella burnetii (strain Q212)).